The following is a 710-amino-acid chain: uncharacterized protein (710 aa).

Coiled coils occupy residues Leu-273 to Gly-298 and Arg-477 to Thr-528.

This is an uncharacterized protein from Coxiella burnetii (strain RSA 493 / Nine Mile phase I).